Reading from the N-terminus, the 435-residue chain is tRNA(Ile)-lysidine synthase (435 aa).

23–28 (SGGMDS) serves as a coordination point for ATP.

The protein belongs to the tRNA(Ile)-lysidine synthase family.

The protein resides in the cytoplasm. It catalyses the reaction cytidine(34) in tRNA(Ile2) + L-lysine + ATP = lysidine(34) in tRNA(Ile2) + AMP + diphosphate + H(+). In terms of biological role, ligates lysine onto the cytidine present at position 34 of the AUA codon-specific tRNA(Ile) that contains the anticodon CAU, in an ATP-dependent manner. Cytidine is converted to lysidine, thus changing the amino acid specificity of the tRNA from methionine to isoleucine. This Xanthomonas campestris pv. campestris (strain 8004) protein is tRNA(Ile)-lysidine synthase.